The sequence spans 520 residues: Ribonuclease Y (520 aa).

At 1–3 the chain is on the extracellular side; it reads MTP. A helical transmembrane segment spans residues 4–24; the sequence is IMMVLISILLILLGLVVGYFV. The Cytoplasmic segment spans residues 25–520; it reads RKTIAEAKIA…RETRAVEYAK (496 aa). Residues 29–141 adopt a coiled-coil conformation; that stretch reads AEAKIAGARG…KVDEMIRMQQ (113 aa). The KH domain maps to 210–273; the sequence is TVSVVNLPND…ETARIALDKL (64 aa). The region spanning 336–429 is the HD domain; it reads VLKHSMEVAF…VAAADALSAA (94 aa).

This sequence belongs to the RNase Y family. In terms of assembly, homodimer. Component of a possible RNA degradosome complex composed of rny, rnjA, rnjB, pnp, pfkA and eno (although rnjA and rnjB's presence is unclear). Interacts with RNA helicase CshA which may also be a member of the RNA degradosome complex. Interacts with full-length dynamin-like protein DynA. Requires Mg(2+) as cofactor. Mn(2+) is required as a cofactor. It depends on Zn(2+) as a cofactor.

The protein resides in the cell membrane. Shows preference for transcripts carrying a monophosphate group at the 5' end. Functionally, endoribonuclease that initiates mRNA decay. Initiates the decay of all SAM-dependent riboswitches, such as yitJ riboswitch. Involved in processing of the gapA operon mRNA, it cleaves between cggR and gapA. Is also the decay-initiating endonuclease for rpsO mRNA. Involved in degradation of type I toxin-antitoxin system bsrG/SR4 RNAs and a minor role in degradation of type I toxin-antitoxin system bsrE/SR5 degradation. In Bacillus subtilis (strain 168), this protein is Ribonuclease Y (rny).